We begin with the raw amino-acid sequence, 200 residues long: Guanylate kinase (200 aa).

The Guanylate kinase-like domain occupies 6–184 (GLLIVLSGPS…AVDKLKSILL (179 aa)). 13-20 (GPSGAGKG) contributes to the ATP binding site.

The protein belongs to the guanylate kinase family.

Its subcellular location is the cytoplasm. It carries out the reaction GMP + ATP = GDP + ADP. In terms of biological role, essential for recycling GMP and indirectly, cGMP. The protein is Guanylate kinase of Desulfitobacterium hafniense (strain Y51).